The chain runs to 433 residues: Enolase (433 aa).

Glutamine 167 lines the (2R)-2-phosphoglycerate pocket. The active-site Proton donor is glutamate 209. The Mg(2+) site is built by aspartate 246, glutamate 291, and aspartate 318. 4 residues coordinate (2R)-2-phosphoglycerate: lysine 343, arginine 372, serine 373, and lysine 394. The active-site Proton acceptor is lysine 343.

This sequence belongs to the enolase family. Component of the RNA degradosome, a multiprotein complex involved in RNA processing and mRNA degradation. Requires Mg(2+) as cofactor.

It localises to the cytoplasm. The protein resides in the secreted. It is found in the cell surface. The enzyme catalyses (2R)-2-phosphoglycerate = phosphoenolpyruvate + H2O. The protein operates within carbohydrate degradation; glycolysis; pyruvate from D-glyceraldehyde 3-phosphate: step 4/5. In terms of biological role, catalyzes the reversible conversion of 2-phosphoglycerate (2-PG) into phosphoenolpyruvate (PEP). It is essential for the degradation of carbohydrates via glycolysis. This Tolumonas auensis (strain DSM 9187 / NBRC 110442 / TA 4) protein is Enolase.